The chain runs to 456 residues: Alcohol acyltransferase 17 (456 aa).

Catalysis depends on proton acceptor residues His-166 and Asp-382.

The protein belongs to the plant acyltransferase family. In terms of tissue distribution, expressed in fruit.

Involved in the biosynthesis of volatile esters which confer kiwifruit flavor. Alcohol acyl transferase that can use a wide range of alcohols as substrate to produce esters. This chain is Alcohol acyltransferase 17, found in Actinidia deliciosa (Kiwi).